The chain runs to 138 residues: Sporulation-specific cell division protein SsgB (138 aa).

This sequence belongs to the SsgA family. Monomer. Interacts with SsgA. Interacts with FtsZ (via N-terminus).

The protein localises to the cell septum. In terms of biological role, involved in sporulation-specific cell division. Required for early stages of sporulation. Important in the process of growth cessation prior to sporulation-specific cell division. Recruits cell division protein FtsZ to the future septum sites and tethers the contractile ring structure (Z ring) to the cytoplasmic membrane during sporulation. Stimulates polymerization and filament length of FtsZ in vitro. The chain is Sporulation-specific cell division protein SsgB from Thermobifida fusca (strain YX).